A 519-amino-acid polypeptide reads, in one-letter code: Carboxyl-terminal-processing peptidase 3, chloroplastic (519 aa).

The 89-residue stretch at 186-274 folds into the PDZ domain; that stretch reads YQSFRIGSDG…IKLKNVNGSG (89 aa). Catalysis depends on charge relay system residues Ser-407 and Lys-432.

Belongs to the peptidase S41A family.

It is found in the plastid. Its subcellular location is the chloroplast thylakoid lumen. The catalysed reaction is The enzyme shows specific recognition of a C-terminal tripeptide, Xaa-Yaa-Zaa, in which Xaa is preferably Ala or Leu, Yaa is preferably Ala or Tyr, and Zaa is preferably Ala, but then cleaves at a variable distance from the C-terminus. A typical cleavage is -Ala-Ala-|-Arg-Ala-Ala-Lys-Glu-Asn-Tyr-Ala-Leu-Ala-Ala.. In terms of biological role, protease involved in the C-terminal processing of the chloroplastic D1 protein of photosystem II. This proteolytic processing is necessary to allow the light-driven assembly of the tetranuclear manganese cluster, which is responsible for photosynthetic water oxidation. The protein is Carboxyl-terminal-processing peptidase 3, chloroplastic (CTPA3) of Arabidopsis thaliana (Mouse-ear cress).